We begin with the raw amino-acid sequence, 244 residues long: 5-oxoprolinase subunit A (244 aa).

It belongs to the LamB/PxpA family. Forms a complex composed of PxpA, PxpB and PxpC.

It catalyses the reaction 5-oxo-L-proline + ATP + 2 H2O = L-glutamate + ADP + phosphate + H(+). Its function is as follows. Catalyzes the cleavage of 5-oxoproline to form L-glutamate coupled to the hydrolysis of ATP to ADP and inorganic phosphate. The sequence is that of 5-oxoprolinase subunit A from Salmonella newport (strain SL254).